A 1031-amino-acid polypeptide reads, in one-letter code: MDKWKYARLAQFLFTLSLLFLETSFGLGGNKTLCLDKERDALLEFKRGLTDSFDHLSTWGDEEDKQECCKWKGIECDRRTGHVTVIDLHNKFTCSAGASACFAPRLTGKLSPSLLELEYLNYLDLSVNEFERSEIPRFIGSLKRLEYLNLSASFFSGVIPIQFQNLTSLRTLDLGENNLIVKDLRWLSHLSSLEFLSLSSSNFQVNNWFQEITKVPSLKELDLSGCGLSKLVPSQADLANSSLISLSVLHLCCNEFSSSSEYSWVFNLTTSLTSIDLLYNQLSGQIDDRFGTLMYLEHLDLANNLKIEGGVPSSFGNLTRLRHLDMSNTQTVQWLPELFLRLSGSRKSLEVLGLNENSLFGSIVNATRFSSLKKLYLQKNMLNGSFMESAGQVSTLEYLDLSENQMRGALPDLALFPSLRELHLGSNQFRGRIPQGIGKLSQLRILDVSSNRLEGLPESMGQLSNLESFDASYNVLKGTITESHLSNLSSLVDLDLSFNSLALKTSFNWLPPFQLQVISLPSCNLGPSFPKWLQNQNNYTVLDISLASISDTLPSWFSSFPPDLKILNLSNNQISGRVSDLIENTYGYRVIDLSYNNFSGALPLVPTNVQIFYLHKNQFFGSISSICRSRTSPTSLDLSHNQFSGELPDCWMNMTSLAVLNLAYNNFSGEIPHSLGSLTNLKALYIRQNSLSGMLPSFSQCQGLQILDLGGNKLTGSIPGWIGTDLLNLRILSLRFNRLHGSIPSIICQLQFLQILDLSANGLSGKIPHCFNNFTLLYQDNNSGEPMEFIVQGFYGKFPRRYLYIGDLLVQWKNQESEYKNPLLYLKTIDLSSNELIGGVPKEIADMRGLKSLNLSRNELNGTVIEGIGQMRMLESLDMSRNQLSGVIPQDLANLTFLSVLDLSNNQLSGRIPSSTQLQSFDRSSYSDNAQLCGPPLQECPGYAPPSPLIDHGSNNNPQEHDEEEEFPSLEFYISMVLSFFVAFWGILGCLIVNSSWRNAYFKFLTDTTSWLDMISRVWFARLKKKLRRAR.

The first 29 residues, 1-29 (MDKWKYARLAQFLFTLSLLFLETSFGLGG), serve as a signal peptide directing secretion. Asn-30 carries an N-linked (GlcNAc...) asparagine glycan. The interval 30-113 (NKTLCLDKER…PRLTGKLSPS (84 aa)) is N-cap. The Extracellular portion of the chain corresponds to 30-971 (NKTLCLDKER…DEEEEFPSLE (942 aa)). One copy of the LRR 1 repeat lies at 117-140 (LEYLNYLDLSVNEFERSEIPRFIG). The LRR 2; degenerate repeat unit spans residues 142–165 (LKRLEYLNLSASFFSGVIPIQFQN). N-linked (GlcNAc...) asparagine glycosylation is found at Asn-149 and Asn-165. 4 LRR repeats span residues 166 to 189 (LTSLRTLDLGENNLIVKDLRWLSH), 191 to 215 (SSLEFLSLSSSNFQVNNWFQEITKV), 216 to 240 (PSLKELDLSGCGLSKLVPSQADLAN), and 243 to 266 (LISLSVLHLCCNEFSSSSEYSWVF). The N-linked (GlcNAc...) asparagine glycan is linked to Asn-240. A glycan (N-linked (GlcNAc...) asparagine) is linked at Asn-267. 14 LRR repeats span residues 269 to 292 (TTSLTSIDLLYNQLSGQIDDRFGT), 293 to 317 (LMYLEHLDLANNLKIEGGVPSSFGN), 318 to 341 (LTRLRHLDMSNTQTVQWLPELFLR), 346 to 369 (RKSLEVLGLNENSLFGSIVNATRF), 370 to 393 (SSLKKLYLQKNMLNGSFMESAGQV), 394 to 416 (STLEYLDLSENQMRGALPDLALF), 417 to 440 (PSLRELHLGSNQFRGRIPQGIGKL), 441 to 463 (SQLRILDVSSNRLEGLPESMGQL), 465 to 487 (NLESFDASYNVLKGTITESHLSN), 488 to 509 (LSSLVDLDLSFNSLALKTSFNW), 512 to 536 (PFQLQVISLPSCNLGPSFPKWLQNQ), 538 to 559 (NYTVLDISLASISDTLPSWFSS), 561 to 584 (PPDLKILNLSNNQISGRVSDLIEN), and 586 to 611 (YGYRVIDLSYNNFSGALPLVPTNVQI). An N-linked (GlcNAc...) asparagine glycan is attached at Asn-317. Asn-365 and Asn-383 each carry an N-linked (GlcNAc...) asparagine glycan. The N-linked (GlcNAc...) asparagine glycan is linked to Asn-487. N-linked (GlcNAc...) asparagine glycans are attached at residues Asn-538, Asn-568, and Asn-597. The stretch at 612-629 (FYLHKNQFFGSISSICRS) is one LRR 21; degenerate repeat. LRR repeat units lie at residues 630-654 (RTSPTSLDLSHNQFSGELPDCWMNM), 655-678 (TSLAVLNLAYNNFSGEIPHSLGSL), 679-703 (TNLKALYIRQNSLSGMLPSFSQCQG), 705-725 (QILDLGGNKLTGSIPGWIGTD), 726-750 (LLNLRILSLRFNRLHGSIPSIICQL), and 752-773 (FLQILDLSANGLSGKIPHCFNN). N-linked (GlcNAc...) asparagine glycosylation is found at Asn-653 and Asn-666. Asn-773 and Asn-781 each carry an N-linked (GlcNAc...) asparagine glycan. 4 LRR repeats span residues 823-847 (LLYLKTIDLSSNELIGGVPKEIADM), 848-871 (RGLKSLNLSRNELNGTVIEGIGQM), 872-895 (RMLESLDMSRNQLSGVIPQDLANL), and 896-918 (TFLSVLDLSNNQLSGRIPSSTQL). Residues Asn-854, Asn-861, and Asn-894 are each glycosylated (N-linked (GlcNAc...) asparagine). A C-cap/acidic domain region spans residues 919 to 971 (QSFDRSSYSDNAQLCGPPLQECPGYAPPSPLIDHGSNNNPQEHDEEEEFPSLE). A helical membrane pass occupies residues 972-992 (FYISMVLSFFVAFWGILGCLI). The Cytoplasmic segment spans residues 993–1031 (VNSSWRNAYFKFLTDTTSWLDMISRVWFARLKKKLRRAR).

Belongs to the RLP family. As to quaternary structure, interacts with EIX elicitor protein.

Its subcellular location is the cell membrane. Involved in plant defense. Confers resistance to the fungal pathogen T.viride through recognition of the EIX elicitor protein. The polypeptide is Receptor-like protein EIX1 (Solanum lycopersicum (Tomato)).